The following is a 208-amino-acid chain: MIGLVGRKVGMTRIFNEDGVSIPVTVIEIEANRVTQVKTLENDGYTAVQVTTGFKKASRVTKPEAGHFVKAGVEAGRGLWEFRTEGEEFTLGQEINVDIFTDVKKVDVTGTSKGKGFQGGVKRWNFRTQDATHGNSLSHRVLGSIGQNQTPGRVFKGKKMAGHLGAERVTVQSLEIVRVDVERKLLLVKGSVPGATNSDVIVKPAVKA.

Q149 carries the N5-methylglutamine modification.

The protein belongs to the universal ribosomal protein uL3 family. Part of the 50S ribosomal subunit. Forms a cluster with proteins L14 and L19. Post-translationally, methylated by PrmB.

Functionally, one of the primary rRNA binding proteins, it binds directly near the 3'-end of the 23S rRNA, where it nucleates assembly of the 50S subunit. In Histophilus somni (strain 129Pt) (Haemophilus somnus), this protein is Large ribosomal subunit protein uL3.